We begin with the raw amino-acid sequence, 147 residues long: Cytochrome c-type biogenesis protein CcmE (147 aa).

Residues 1 to 9 (MKSLKKQRR) lie on the Cytoplasmic side of the membrane. Residues 10 to 30 (IQIIALATVALVGSTALIGYA) form a helical; Signal-anchor for type II membrane protein membrane-spanning segment. Topologically, residues 31–147 (MRDGINYFRS…EQGVYREGDS (117 aa)) are periplasmic. Residues His-123 and Tyr-127 each coordinate heme.

This sequence belongs to the CcmE/CycJ family.

Its subcellular location is the cell inner membrane. In terms of biological role, heme chaperone required for the biogenesis of c-type cytochromes. Transiently binds heme delivered by CcmC and transfers the heme to apo-cytochromes in a process facilitated by CcmF and CcmH. In Ruegeria sp. (strain TM1040) (Silicibacter sp.), this protein is Cytochrome c-type biogenesis protein CcmE.